Reading from the N-terminus, the 191-residue chain is Putative manganese efflux pump MntP (191 aa).

Transmembrane regions (helical) follow at residues 3-23 (PISILLIGFAMSTDAFAAAIG), 37-57 (LRAGIIFGVIEAITPIIGWLL), 65-85 (VEAFDHWIAFGLLGALGIHMI), 107-129 (WKLALTGFATSIDAMAVGIGLAF), 144-164 (CTLTMVTAGIMFGRVLGSMVG), and 169-189 (IIGGVILVIIGATILYEHLHG).

The protein belongs to the MntP (TC 9.B.29) family.

The protein resides in the cell inner membrane. Its function is as follows. Probably functions as a manganese efflux pump. In Stenotrophomonas maltophilia (strain K279a), this protein is Putative manganese efflux pump MntP.